A 219-amino-acid chain; its full sequence is Ribonuclease HII (219 aa).

An RNase H type-2 domain is found at 22–219; it reads GLVAGVDEVG…LLAMRMEAVV (198 aa). D28, E29, and D125 together coordinate a divalent metal cation.

The protein belongs to the RNase HII family. Mn(2+) is required as a cofactor. It depends on Mg(2+) as a cofactor.

Its subcellular location is the cytoplasm. It carries out the reaction Endonucleolytic cleavage to 5'-phosphomonoester.. Functionally, endonuclease that specifically degrades the RNA of RNA-DNA hybrids. The polypeptide is Ribonuclease HII (Granulibacter bethesdensis (strain ATCC BAA-1260 / CGDNIH1)).